The sequence spans 155 residues: Methylated-DNA--protein-cysteine methyltransferase (155 aa).

Catalysis depends on C119, which acts as the Nucleophile; methyl group acceptor.

Belongs to the MGMT family.

The protein localises to the cytoplasm. It catalyses the reaction a 6-O-methyl-2'-deoxyguanosine in DNA + L-cysteinyl-[protein] = S-methyl-L-cysteinyl-[protein] + a 2'-deoxyguanosine in DNA. The catalysed reaction is a 4-O-methyl-thymidine in DNA + L-cysteinyl-[protein] = a thymidine in DNA + S-methyl-L-cysteinyl-[protein]. Functionally, involved in the cellular defense against the biological effects of O6-methylguanine (O6-MeG) and O4-methylthymine (O4-MeT) in DNA. Repairs the methylated nucleobase in DNA by stoichiometrically transferring the methyl group to a cysteine residue in the enzyme. This is a suicide reaction: the enzyme is irreversibly inactivated. This is Methylated-DNA--protein-cysteine methyltransferase from Sulfolobus acidocaldarius (strain ATCC 33909 / DSM 639 / JCM 8929 / NBRC 15157 / NCIMB 11770).